Here is a 544-residue protein sequence, read N- to C-terminus: CTP synthase (544 aa).

Residues 1 to 265 (MTKFIFVTGG…DNIITEQLQL (265 aa)) form an amidoligase domain region. Residue Ser-13 coordinates CTP. UTP is bound at residue Ser-13. ATP is bound by residues 14 to 19 (SLGKGI) and Asp-71. Mg(2+)-binding residues include Asp-71 and Glu-139. Residues 146–148 (DIE), 186–191 (KTKPTQ), and Lys-222 contribute to the CTP site. UTP is bound by residues 186–191 (KTKPTQ) and Lys-222. In terms of domain architecture, Glutamine amidotransferase type-1 spans 290–544 (KIAMVGKYVD…VKAALNNKKA (255 aa)). Gly-353 is an L-glutamine binding site. Cys-380 serves as the catalytic Nucleophile; for glutamine hydrolysis. L-glutamine contacts are provided by residues 381–384 (LGMQ), Glu-404, and Arg-471. Active-site residues include His-517 and Glu-519.

This sequence belongs to the CTP synthase family. Homotetramer.

It carries out the reaction UTP + L-glutamine + ATP + H2O = CTP + L-glutamate + ADP + phosphate + 2 H(+). It catalyses the reaction L-glutamine + H2O = L-glutamate + NH4(+). The enzyme catalyses UTP + NH4(+) + ATP = CTP + ADP + phosphate + 2 H(+). It participates in pyrimidine metabolism; CTP biosynthesis via de novo pathway; CTP from UDP: step 2/2. With respect to regulation, allosterically activated by GTP, when glutamine is the substrate; GTP has no effect on the reaction when ammonia is the substrate. The allosteric effector GTP functions by stabilizing the protein conformation that binds the tetrahedral intermediate(s) formed during glutamine hydrolysis. Inhibited by the product CTP, via allosteric rather than competitive inhibition. Its function is as follows. Catalyzes the ATP-dependent amination of UTP to CTP with either L-glutamine or ammonia as the source of nitrogen. Regulates intracellular CTP levels through interactions with the four ribonucleotide triphosphates. This Neisseria meningitidis serogroup B (strain ATCC BAA-335 / MC58) protein is CTP synthase.